Consider the following 251-residue polypeptide: Ribonuclease 3 (251 aa).

The 123-residue stretch at 3 to 125 folds into the RNase III domain; that stretch reads LATLETRLGH…LFGAVFLDAG (123 aa). Mg(2+) is bound at residue E38. D42 is a catalytic residue. Residues D111 and E114 each contribute to the Mg(2+) site. Residue E114 is part of the active site. The 71-residue stretch at 152-222 folds into the DRBM domain; that stretch reads DAKTLLQEFL…AKLALEAALV (71 aa).

It belongs to the ribonuclease III family. In terms of assembly, homodimer. Mg(2+) is required as a cofactor.

The protein resides in the cytoplasm. The catalysed reaction is Endonucleolytic cleavage to 5'-phosphomonoester.. Functionally, digests double-stranded RNA. Involved in the processing of primary rRNA transcript to yield the immediate precursors to the large and small rRNAs (23S and 16S). Processes some mRNAs, and tRNAs when they are encoded in the rRNA operon. Processes pre-crRNA and tracrRNA of type II CRISPR loci if present in the organism. This chain is Ribonuclease 3, found in Bordetella avium (strain 197N).